Here is a 384-residue protein sequence, read N- to C-terminus: Nodal homolog 2-B (384 aa).

A signal peptide spans 1–18 (MASLGAILLFAIASLMHG). The propeptide occupies 19 to 283 (RPIHSDRKGA…RVADARRHRR (265 aa)). N-linked (GlcNAc...) asparagine glycosylation is found at N71, N173, and N344. C306 and C372 form a disulfide bridge.

It belongs to the TGF-beta family. In terms of assembly, homodimer; disulfide-linked. Forms heterodimers with the TGF-beta family member derriere. Interacts with tsku; enhances nodal2 activity.

It localises to the secreted. Functionally, cooperation and regulatory loops of multiple nodals are essential for mesendoderm patterning in early embryos. Essential for mesoderm formation and axial patterning during embryonic development. Activates the activin-like signaling pathway to induce dorsal and ventral mesoderm in animal cap ectoderm. In addition, also dorsalizes ventral marginal zone (VMZ) tissues during gastrulation. Induces muscle actin. Appears to act as both a short-range and long-range morphogen. The unprocessed protein inhibits bmp- and wnt-signaling. The sequence is that of Nodal homolog 2-B (nodal2-b) from Xenopus laevis (African clawed frog).